The primary structure comprises 402 residues: MSVDIRPTPPAQDSARQNVTLQIVSVVMFTFIGYLTIGIPLAVLPGYVHDDLGYGSVLAGLVISLQYLATLLARPYAGRVIDGLGPKRAVLYGMAGSAASGLFMLLSVAIQGWPALSLASLLVGRLVLGAAESLVGSAAIGWGIGRVGAPHTAKVISWNGIASYGAIALGAPLGVLLVQWLGLWSMGASIVLLGALGFALAWPKLPAPLVHGERLPFHHVLGRVTPHGMGLALGAIGFGTIATFITLYYASRGWANAVLCLSAFGGCFIGARLLFANSINRLGGFRVAIICLGVESLGLLLLWSAPNPWVGLAGAALTGFGFSLVFPAFGVEAVNLVPASNRGAALGAYSLFVDLSLGITGPLVGFVANLFGFRSMFLFACLASLGGLALAVALHRRSRRPG.

A run of 12 helical transmembrane segments spans residues 23-43 (IVSV…PLAV), 52-72 (LGYG…ATLL), 90-110 (VLYG…SVAI), 121-141 (LLVG…AAIG), 158-178 (WNGI…VLLV), 180-200 (WLGL…GFAL), 228-248 (GMGL…ITLY), 255-275 (ANAV…RLLF), 282-302 (LGGF…LLLL), 309-329 (WVGL…FPAF), 351-371 (LFVD…ANLF), and 375-395 (SMFL…VALH).

It belongs to the major facilitator superfamily. YhhS family.

It localises to the cell inner membrane. This is an uncharacterized protein from Pseudomonas aeruginosa (strain ATCC 15692 / DSM 22644 / CIP 104116 / JCM 14847 / LMG 12228 / 1C / PRS 101 / PAO1).